Reading from the N-terminus, the 551-residue chain is Colicin-E6 (551 aa).

5 disordered regions span residues 1-74 (MSGG…SGGG), 244-269 (LSPGVTNNTDKDVRPAGFTQGGNTRD), 293-317 (PDQVKQRQDEENRRQQEWDATHPVE), 406-501 (NKQA…WYGD), and 517-551 (EGYRASDGQHLGSFEPKTGNQLKGPDPKRNIKKYL). Residues 20-35 (INGGPTGLGVGGGASD) show a composition bias toward gly residues. Positions 36–45 (GSGWSSENNP) are enriched in low complexity. The span at 46-74 (WGGGSGSGIHWGGGSGHGNGGGNGNSGGG) shows a compositional bias: gly residues. Basic and acidic residues-rich tracts occupy residues 296–317 (VKQRQDEENRRQQEWDATHPVE) and 430–484 (ESRK…EGKP). Residues 455-551 (KGVKDYGHDY…DPKRNIKKYL (97 aa)) form a ribosome inactivating activity region. The interval 530–551 (FEPKTGNQLKGPDPKRNIKKYL) is binding of immunity protein.

It belongs to the cloacin colicin family.

In terms of biological role, inactivates ribosomes by hydrolyzing 16S RNA in 30S ribosomes at a specific site. Its function is as follows. Colicins are polypeptide toxins produced by and active against E.coli and closely related bacteria. In Escherichia coli, this protein is Colicin-E6.